The primary structure comprises 563 residues: Tripeptidyl-peptidase 1 (563 aa).

A signal peptide spans 1 to 19 (MRLRTCLLGLLALCVASKC). Positions 20 to 195 (SYSPEPDQQR…PEPQVSGTVG (176 aa)) are cleaved as a propeptide — removed in mature form. C111 and C122 form a disulfide bridge. The Peptidase S53 domain occupies 199 to 563 (GVTPSVIRQR…PALLKALIKP (365 aa)). N210 and N222 each carry an N-linked (GlcNAc...) asparagine glycan. Residues E272 and D276 each act as charge relay system in the active site. N-linked (GlcNAc...) asparagine glycosylation is found at N286, N313, and N443. 2 disulfide bridges follow: C365-C526 and C522-C537. The active-site Charge relay system is S475. 2 residues coordinate Ca(2+): D517 and V518. The Ca(2+) site is built by G539, G541, and D543.

In terms of assembly, monomer. Interacts with CLN5. Interacts with CLN3. Ca(2+) is required as a cofactor. In terms of processing, activated by autocatalytic proteolytical processing upon acidification. N-glycosylation is required for processing and activity.

It localises to the lysosome. It is found in the melanosome. It carries out the reaction Release of an N-terminal tripeptide from a polypeptide, but also has endopeptidase activity.. Lysosomal serine protease with tripeptidyl-peptidase I activity. May act as a non-specific lysosomal peptidase which generates tripeptides from the breakdown products produced by lysosomal proteinases. Requires substrates with an unsubstituted N-terminus. The polypeptide is Tripeptidyl-peptidase 1 (TPP1) (Canis lupus familiaris (Dog)).